A 503-amino-acid polypeptide reads, in one-letter code: Probable cytosol aminopeptidase (503 aa).

2 residues coordinate Mn(2+): Lys-270 and Asp-275. Lys-282 is a catalytic residue. Mn(2+) is bound by residues Asp-293, Asp-352, and Glu-354. Arg-356 is a catalytic residue.

The protein belongs to the peptidase M17 family. Mn(2+) serves as cofactor.

It is found in the cytoplasm. It carries out the reaction Release of an N-terminal amino acid, Xaa-|-Yaa-, in which Xaa is preferably Leu, but may be other amino acids including Pro although not Arg or Lys, and Yaa may be Pro. Amino acid amides and methyl esters are also readily hydrolyzed, but rates on arylamides are exceedingly low.. The enzyme catalyses Release of an N-terminal amino acid, preferentially leucine, but not glutamic or aspartic acids.. In terms of biological role, presumably involved in the processing and regular turnover of intracellular proteins. Catalyzes the removal of unsubstituted N-terminal amino acids from various peptides. This is Probable cytosol aminopeptidase from Shigella flexneri.